A 607-amino-acid chain; its full sequence is Probable CoA ligase CCL8 (607 aa).

ATP contacts are provided by residues 236–244, 391–396, Asp-474, 486–489, and Lys-591; these read TSGTTGKPK, ERYGMT, and ILGR. Residues 305–391 form an SBD1 region; the sequence is SVRGIWQRWR…QTITGHRLLE (87 aa). An SBD2 region spans residues 392-453; the sequence is RYGMTEFVMA…VRSPSLFKEY (62 aa).

It belongs to the ATP-dependent AMP-binding enzyme family. Mostly expressed at low levels in glandular trichomes (lupulin glands) after flowering, and, to a lower extent, in stems, leaves, flowers and cones.

It is found in the cytoplasm. Its subcellular location is the cytosol. This chain is Probable CoA ligase CCL8, found in Humulus lupulus (European hop).